The following is a 533-amino-acid chain: Beta-1,2-xylosyltransferase RCN11 (533 aa).

At 1–23 the chain is on the cytoplasmic side; the sequence is MMPVRTYHHHHHHNNSNNHRLRR. Residues 24 to 44 traverse the membrane as a helical; Signal-anchor for type II membrane protein segment; the sequence is IIPRVLLAVFAIYAVSFAAYL. The Lumenal segment spans residues 45-533; it reads LRHQSPHPHP…LSNILKGFGC (489 aa). Residues 51-78 form a disordered region; that stretch reads HPHPHPAADPERDAVDAAGGGGGGGAVD. Over residues 56-65 the composition is skewed to basic and acidic residues; the sequence is PAADPERDAV. Asparagine 307 and asparagine 313 each carry an N-linked (GlcNAc...) asparagine glycan.

It belongs to the glycosyltransferase 61 family. In terms of tissue distribution, expressed at the base of the crown roots and in the basal region of the shoot, which contains the shoot and axillary meristems.

It is found in the golgi apparatus membrane. It participates in glycan metabolism. Its function is as follows. Glycosyltransferase involved in the xylosylation of N-glycans. Possesses beta-1,2-xylosyltransferase activity, transferring xylose from UDP-xylose to the core beta-linked mannose of N-glycans. Beta-1,2-linked xylose residues on N-glycans are critical for seed germination and plant development and growth under conditions of abiotic stress. In Oryza sativa subsp. japonica (Rice), this protein is Beta-1,2-xylosyltransferase RCN11.